We begin with the raw amino-acid sequence, 340 residues long: Uroporphyrinogen decarboxylase (340 aa).

Substrate-binding positions include 21 to 25 (RQAGR), Asp71, Tyr148, Ser203, and His316.

Belongs to the uroporphyrinogen decarboxylase family. In terms of assembly, homodimer.

It localises to the cytoplasm. The enzyme catalyses uroporphyrinogen III + 4 H(+) = coproporphyrinogen III + 4 CO2. It functions in the pathway porphyrin-containing compound metabolism; protoporphyrin-IX biosynthesis; coproporphyrinogen-III from 5-aminolevulinate: step 4/4. Functionally, catalyzes the decarboxylation of four acetate groups of uroporphyrinogen-III to yield coproporphyrinogen-III. This is Uroporphyrinogen decarboxylase from Campylobacter jejuni (strain RM1221).